A 159-amino-acid chain; its full sequence is Endoribonuclease YbeY (159 aa).

Zn(2+) contacts are provided by His-124, His-128, and His-134.

Belongs to the endoribonuclease YbeY family. Requires Zn(2+) as cofactor.

The protein resides in the cytoplasm. Its function is as follows. Single strand-specific metallo-endoribonuclease involved in late-stage 70S ribosome quality control and in maturation of the 3' terminus of the 16S rRNA. In Halalkalibacterium halodurans (strain ATCC BAA-125 / DSM 18197 / FERM 7344 / JCM 9153 / C-125) (Bacillus halodurans), this protein is Endoribonuclease YbeY.